A 350-amino-acid polypeptide reads, in one-letter code: MLPSLQSLTKKVLAGQCVPTNQHYLLKCYDLWWHDGPITFDHNLKLIKSAGIKEGLDLNTALVKAVRENNYNLIKLFAEWGANINYGLVSVNTEHTWDLCRELGAKETLNEEEILQIFIDLKFHKTSSNIILCHEVFSNNPILQKVNNIKMRIEIFWELRELIEKTDLLNNEFSLSTLLLKYWYAIAIRYNLKEAIQYFYQKYTHLNTWRLTCALCFNNVFDLHEAYEKDKIHMDIEEMMRIACIKDHNLSTMYYCYVLGGNINQAMLTSIQYYNIENMFFCMDLGADAFEEGTIALGEGYKLIKNILSLKIYSPATTPLPKSTDPEIIDHALKNYVSKNMMIFLTYDLR.

Residues 57–89 (DLNTALVKAVRENNYNLIKLFAEWGANINYGLV) form an ANK repeat.

This sequence belongs to the asfivirus MGF 360 family.

Its function is as follows. Plays a role in virus cell tropism, and may be required for efficient virus replication in macrophages. The polypeptide is Protein MGF 360-12L (Ornithodoros (relapsing fever ticks)).